A 310-amino-acid polypeptide reads, in one-letter code: Methionyl-tRNA formyltransferase (310 aa).

Position 109–112 (Ser-109–Pro-112) interacts with (6S)-5,6,7,8-tetrahydrofolate.

It belongs to the Fmt family.

The enzyme catalyses L-methionyl-tRNA(fMet) + (6R)-10-formyltetrahydrofolate = N-formyl-L-methionyl-tRNA(fMet) + (6S)-5,6,7,8-tetrahydrofolate + H(+). Its function is as follows. Attaches a formyl group to the free amino group of methionyl-tRNA(fMet). The formyl group appears to play a dual role in the initiator identity of N-formylmethionyl-tRNA by promoting its recognition by IF2 and preventing the misappropriation of this tRNA by the elongation apparatus. The sequence is that of Methionyl-tRNA formyltransferase from Pseudomonas putida (strain W619).